Consider the following 167-residue polypeptide: Early nodulin-like protein 16 (167 aa).

An N-terminal signal peptide occupies residues 1-24; it reads MARVAVLVAGAVLAFLLAATNVTA. In terms of domain architecture, Phytocyanin spans 25–126; that stretch reads KRWTVGDNKF…GMKLAVLVEK (102 aa). N-linked (GlcNAc...) asparagine glycans are attached at residues N40, N71, N86, and N99. Cysteines 78 and 114 form a disulfide. The GPI-anchor amidated asparagine moiety is linked to residue N138. A propeptide spans 139–167 (removed in mature form); sequence SARRTFSVSGFAYQFLIPVAVFAAVGTRY.

It belongs to the early nodulin-like (ENODL) family.

It is found in the cell membrane. May act as a carbohydrate transporter. In Arabidopsis thaliana (Mouse-ear cress), this protein is Early nodulin-like protein 16.